A 424-amino-acid chain; its full sequence is Serine--tRNA ligase (424 aa).

Residue 229-231 (TAE) coordinates L-serine. 260–262 (RRE) is a binding site for ATP. E283 is an L-serine binding site. Residue 347–350 (EVSS) participates in ATP binding. S383 is a binding site for L-serine.

Belongs to the class-II aminoacyl-tRNA synthetase family. Type-1 seryl-tRNA synthetase subfamily. Homodimer. The tRNA molecule binds across the dimer.

Its subcellular location is the cytoplasm. It catalyses the reaction tRNA(Ser) + L-serine + ATP = L-seryl-tRNA(Ser) + AMP + diphosphate + H(+). The catalysed reaction is tRNA(Sec) + L-serine + ATP = L-seryl-tRNA(Sec) + AMP + diphosphate + H(+). It participates in aminoacyl-tRNA biosynthesis; selenocysteinyl-tRNA(Sec) biosynthesis; L-seryl-tRNA(Sec) from L-serine and tRNA(Sec): step 1/1. In terms of biological role, catalyzes the attachment of serine to tRNA(Ser). Is also able to aminoacylate tRNA(Sec) with serine, to form the misacylated tRNA L-seryl-tRNA(Sec), which will be further converted into selenocysteinyl-tRNA(Sec). In Roseiflexus castenholzii (strain DSM 13941 / HLO8), this protein is Serine--tRNA ligase.